We begin with the raw amino-acid sequence, 20 residues long: Brevinin-1LT (20 aa).

The cysteines at positions 14 and 20 are disulfide-linked.

In terms of tissue distribution, expressed by the skin glands.

The protein resides in the secreted. Functionally, antimicrobial peptide. The chain is Brevinin-1LT from Rana latastei (Italian agile frog).